A 264-amino-acid chain; its full sequence is Movement protein (264 aa).

Residues 211–264 (RTKSSKRGPKNNNNLGKGRSGGRPKPKSFDEVEKEFDNLIEDEAETSVADSDSY) form a disordered region. Basic and acidic residues predominate over residues 237–247 (KSFDEVEKEFD).

Belongs to the tobamovirus movement protein family. As to quaternary structure, binds to host RBCS at the plasmodesmata; this interaction seems required for viral systemic movement. In resistant plants, interacts with host MBP2C at host microtubules; this interaction prevents virus cell to cell movement. In resistant plants, interacts with host resistance (R) protein (e.g. tomato ToMV resistance protein TM-2(2), AC Q71BG9) at the host plasma membrane; this interaction triggers host defense responses leading to programmed cell death.

The protein localises to the host cytoplasm. The protein resides in the host cytoskeleton. It localises to the host cell junction. Its subcellular location is the host plasmodesma. Functionally, transports viral genome to neighboring plant cells directly through plasmosdesmata, without any budding. The movement protein allows efficient cell to cell propagation, by bypassing the host cell wall barrier. Forms a ribonucleoprotein complex with viral RNA. Binds microtubules and modulates microtubule stability. Can bind double-stranded DNA. Triggers host hypersensitive defense reaction in incompatible plants harboring resistance (R) proteins. In Tomato mosaic virus (strain S-1) (ToMV), this protein is Movement protein (MP).